The chain runs to 57 residues: Sec-independent protein translocase protein TatA (57 aa).

A helical membrane pass occupies residues 1–21 (MGISVWQLLIILLIVVMLFGT). The tract at residues 37-57 (GFRKSVSDGETTTQAEASSRS) is disordered. A compositionally biased stretch (polar residues) spans 44-57 (DGETTTQAEASSRS).

This sequence belongs to the TatA/E family. In terms of assembly, the Tat system comprises two distinct complexes: a TatABC complex, containing multiple copies of TatA, TatB and TatC subunits, and a separate TatA complex, containing only TatA subunits. Substrates initially bind to the TatABC complex, which probably triggers association of the separate TatA complex to form the active translocon.

It localises to the cell inner membrane. In terms of biological role, part of the twin-arginine translocation (Tat) system that transports large folded proteins containing a characteristic twin-arginine motif in their signal peptide across membranes. TatA could form the protein-conducting channel of the Tat system. This is Sec-independent protein translocase protein TatA from Stutzerimonas stutzeri (Pseudomonas stutzeri).